The primary structure comprises 88 residues: Putative defensin-like protein 228 (88 aa).

The N-terminal stretch at 1–27 is a signal peptide; it reads MMKSAILLMVSCVFMFLVVSYIQDVEG. 4 cysteine pairs are disulfide-bonded: C32-C88, C42-C66, C50-C82, and C64-C84.

This sequence belongs to the DEFL family.

It is found in the secreted. This is Putative defensin-like protein 228 (SCRL3) from Arabidopsis thaliana (Mouse-ear cress).